Here is a 261-residue protein sequence, read N- to C-terminus: Phosphatidylglycerol--prolipoprotein diacylglyceryl transferase (261 aa).

The next 4 helical transmembrane spans lie at 17–37 (FGIHWYGLMYLIGFLAFLWLG), 60–80 (ALFYGALGVILGGRLGYALFY), 92–112 (ILFLWQGGMSFHGGFLGVMVA), and 121–141 (GLTFFGIMDFVAPLVPVGLGA). A 1,2-diacyl-sn-glycero-3-phospho-(1'-sn-glycerol) is bound at residue R143. The next 3 helical transmembrane spans lie at 175–195 (PSQLYEFLLEGVALFILLWWY), 203–223 (GSVSALFLIGYGSFRFLVEFT), and 237–257 (LSMGQWLSLPMVIAGVWLLIV).

Belongs to the Lgt family.

It is found in the cell inner membrane. It catalyses the reaction L-cysteinyl-[prolipoprotein] + a 1,2-diacyl-sn-glycero-3-phospho-(1'-sn-glycerol) = an S-1,2-diacyl-sn-glyceryl-L-cysteinyl-[prolipoprotein] + sn-glycerol 1-phosphate + H(+). Its pathway is protein modification; lipoprotein biosynthesis (diacylglyceryl transfer). Functionally, catalyzes the transfer of the diacylglyceryl group from phosphatidylglycerol to the sulfhydryl group of the N-terminal cysteine of a prolipoprotein, the first step in the formation of mature lipoproteins. This Methylobacillus flagellatus (strain ATCC 51484 / DSM 6875 / VKM B-1610 / KT) protein is Phosphatidylglycerol--prolipoprotein diacylglyceryl transferase.